Here is a 358-residue protein sequence, read N- to C-terminus: Alanine racemase (358 aa).

Lys35 (proton acceptor; specific for D-alanine) is an active-site residue. Lys35 bears the N6-(pyridoxal phosphate)lysine mark. Arg130 lines the substrate pocket. Tyr255 acts as the Proton acceptor; specific for L-alanine in catalysis. Met303 contacts substrate.

It belongs to the alanine racemase family. The cofactor is pyridoxal 5'-phosphate.

It carries out the reaction L-alanine = D-alanine. Its pathway is amino-acid biosynthesis; D-alanine biosynthesis; D-alanine from L-alanine: step 1/1. Functionally, catalyzes the interconversion of L-alanine and D-alanine. May also act on other amino acids. This Shewanella sediminis (strain HAW-EB3) protein is Alanine racemase (alr).